Here is a 450-residue protein sequence, read N- to C-terminus: Methylenetetrahydrofolate--tRNA-(uracil-5-)-methyltransferase TrmFO (450 aa).

FAD is bound at residue 10 to 15 (GGGLAG).

It belongs to the MnmG family. TrmFO subfamily. Requires FAD as cofactor.

The protein resides in the cytoplasm. The catalysed reaction is uridine(54) in tRNA + (6R)-5,10-methylene-5,6,7,8-tetrahydrofolate + NADH + H(+) = 5-methyluridine(54) in tRNA + (6S)-5,6,7,8-tetrahydrofolate + NAD(+). It carries out the reaction uridine(54) in tRNA + (6R)-5,10-methylene-5,6,7,8-tetrahydrofolate + NADPH + H(+) = 5-methyluridine(54) in tRNA + (6S)-5,6,7,8-tetrahydrofolate + NADP(+). Its function is as follows. Catalyzes the folate-dependent formation of 5-methyl-uridine at position 54 (M-5-U54) in all tRNAs. This Anaeromyxobacter dehalogenans (strain 2CP-C) protein is Methylenetetrahydrofolate--tRNA-(uracil-5-)-methyltransferase TrmFO.